Reading from the N-terminus, the 365-residue chain is Uroporphyrinogen decarboxylase (365 aa).

The span at 1 to 17 shows a compositional bias: polar residues; that stretch reads MSANDSPSGQQTTTSAS. The segment at 1–20 is disordered; sequence MSANDSPSGQQTTTSASLDA. Residues 48–52, D97, Y172, S227, and H341 each bind substrate; that span reads RQAGR.

The protein belongs to the uroporphyrinogen decarboxylase family. As to quaternary structure, homodimer.

The protein localises to the cytoplasm. It carries out the reaction uroporphyrinogen III + 4 H(+) = coproporphyrinogen III + 4 CO2. The protein operates within porphyrin-containing compound metabolism; protoporphyrin-IX biosynthesis; coproporphyrinogen-III from 5-aminolevulinate: step 4/4. Functionally, catalyzes the decarboxylation of four acetate groups of uroporphyrinogen-III to yield coproporphyrinogen-III. The chain is Uroporphyrinogen decarboxylase from Streptomyces griseus subsp. griseus (strain JCM 4626 / CBS 651.72 / NBRC 13350 / KCC S-0626 / ISP 5235).